The following is a 1001-amino-acid chain: MPSTSRAGSLKDQDIAELFFRDDPEKLFSDLREIGHGSFGAVYFAHDASTREVVAIKKMSYSGKQSNEKWQDIVKEVKFLQRIKHPNSIEYKGCYLREHTAWLVMEYCLGSASDLLEVHKKPLQEIEIAAITHGALQGLAYLHSHNLIHRDIKAGNILLTEPGQVKLADFGSASIASPANSFVGTPYWMAPEVILAMDEGQYDGKVDVWSLGITCIELAERKPPLFNMNAMSALYHIAQNESPTLQSNEWSDFFRNFVDSCLQKIPQDRPTSDELLKNMFVLLERPETVLIDLIQRTKDAVRELDNLQYRKMKKLLFQEAHNGPAVETHEEEEEQEHGVGRTGTVNSIGSNQSIPSMSISASSQSSSVTSLPDASDDKSELDMMEGDHTVMSNSSVIHLKPEEENYPEEPEPRTRPSEPHSPPQVSRHKSHYRNREHFATIRTASLVTRQIQEHEQDSELREQMSGYKRMRRQHQKQLMALENKLKAEMDEHRLRLDKDLETQRNNFSAEMEKLVKKHQAAMEKELKSIANDEKKFQQHIQAQQKKELNNFLESQKREYKLRKEQLKEELNENQSTPKKEKQEWLSKQKENFQHFQAEEEANLLRRQRQYLDLECRRFKRRMLLNRHNSEQDLVREELNKRQTQKDLEHAMLLRQHESMQELEFRHLNTIQKMRCELIKLQHQTELTNQLEYNKRRERELRRKHVMEVRQQPKSLKSKELQIKKQFQDTCKIQTRQYKALRNHLLDTTPKNEHKAVLKRLKEEQTRKLAILAEQYDHSINEMLSTQALRLDEAQEAECQVLKMQLQQELELLNAYQSKIKMQAEAQHEREIHELEQRVSLHRGLLEQKIEEEMLALQNERTERIRSLLERQAREIEAFDSESMRLGFSNMILSNLSPEAFSHSYPGASGWSHNPTGGPGPHWGHPMAGPPQAWGHPMQGGPQPWGHPSGSVQGVSRGSTMGVRNSPQALRRTASGGQTEQGMSRSTSVTSQISNGSRMSYT.

The region spanning 28–281 (FSDLREIGHG…SDELLKNMFV (254 aa)) is the Protein kinase domain. ATP-binding positions include 34–42 (IGHGSFGAV) and K57. D151 acts as the Proton acceptor in catalysis. 2 disordered regions span residues 324-431 (PAVE…HKSH) and 567-586 (KEELNENQSTPKKEKQEWLS). The segment covering 350-370 (SNQSIPSMSISASSQSSSVTS) has biased composition (low complexity). Basic and acidic residues-rich tracts occupy residues 375 to 388 (SDDKSELDMMEGDH) and 577 to 586 (PKKEKQEWLS). Coiled coils occupy residues 458–651 (SELR…EHAM) and 754–877 (KAVL…EIEA). Residues 911–1001 (SHNPTGGPGP…ISNGSRMSYT (91 aa)) form a disordered region. Residues 921-930 (HWGHPMAGPP) show a composition bias toward low complexity. Composition is skewed to polar residues over residues 949 to 967 (GSVQGVSRGSTMGVRNSPQ) and 974 to 1001 (SGGQTEQGMSRSTSVTSQISNGSRMSYT).

It belongs to the protein kinase superfamily. STE Ser/Thr protein kinase family. STE20 subfamily.

It localises to the cytoplasm. The enzyme catalyses L-seryl-[protein] + ATP = O-phospho-L-seryl-[protein] + ADP + H(+). It carries out the reaction L-threonyl-[protein] + ATP = O-phospho-L-threonyl-[protein] + ADP + H(+). In terms of biological role, serine/threonine-protein kinase involved in various processes such as p38/mapk14 stress-activated MAPK cascade, DNA damage response and regulation of cytoskeleton stability. Acts as an activator of the p38/MAPK14 stress-activated MAPK cascade by mediating phosphorylation and subsequent activation of upstream MAP kinase kinases. In response to DNA damage, involved in the G2/M transition DNA damage checkpoint by activating the p38/MAPK14 stress-activated MAPK cascade. This chain is Serine/threonine-protein kinase TAO1-A (taok1-a), found in Xenopus laevis (African clawed frog).